Here is a 122-residue protein sequence, read N- to C-terminus: Small ribosomal subunit protein uS13 (122 aa).

The tract at residues 95–122 (SLPCRGQRTSTNARTRKGPKRAAVKKKK) is disordered. Over residues 108-122 (RTRKGPKRAAVKKKK) the composition is skewed to basic residues.

Belongs to the universal ribosomal protein uS13 family. As to quaternary structure, part of the 30S ribosomal subunit. Forms a loose heterodimer with protein S19. Forms two bridges to the 50S subunit in the 70S ribosome.

Its function is as follows. Located at the top of the head of the 30S subunit, it contacts several helices of the 16S rRNA. In the 70S ribosome it contacts the 23S rRNA (bridge B1a) and protein L5 of the 50S subunit (bridge B1b), connecting the 2 subunits; these bridges are implicated in subunit movement. Contacts the tRNAs in the A and P-sites. The protein is Small ribosomal subunit protein uS13 of Desulforapulum autotrophicum (strain ATCC 43914 / DSM 3382 / VKM B-1955 / HRM2) (Desulfobacterium autotrophicum).